We begin with the raw amino-acid sequence, 169 residues long: Large ribosomal subunit protein uL15 (169 aa).

Residues 20 to 56 form a disordered region; it reads GRGIGSGKGKTGGRGVKGQKARSGVSIKGFEGGQMPL. Gly residues predominate over residues 21 to 35; it reads RGIGSGKGKTGGRGV.

The protein belongs to the universal ribosomal protein uL15 family. As to quaternary structure, part of the 50S ribosomal subunit.

In terms of biological role, binds to the 23S rRNA. The polypeptide is Large ribosomal subunit protein uL15 (Methylorubrum extorquens (strain CM4 / NCIMB 13688) (Methylobacterium extorquens)).